Consider the following 229-residue polypeptide: Platelet-activating factor acetylhydrolase IB subunit alpha2 (229 aa).

N-acetylserine is present on Ser2. Position 2 is a phosphoserine (Ser2). The active site involves Ser48. Ser64 carries the phosphoserine modification. Catalysis depends on residues Asp193 and His196. Thr220 bears the Phosphothreonine mark.

The protein belongs to the 'GDSL' lipolytic enzyme family. Platelet-activating factor acetylhydrolase IB beta/gamma subunits subfamily. As to quaternary structure, forms a catalytic dimer which is either homodimer (alpha2/alpha2 homodimer) or heterodimer with PAFAH1B3 (alpha2/alpha1 heterodimer). Component of the cytosolic (PAF-AH (I)) heterotetrameric enzyme, which is composed of PAFAH1B1 (beta), PAFAH1B2 (alpha2) and PAFAH1B3 (alpha1) subunits. The catalytic activity of the enzyme resides in the alpha1 (PAFAH1B3) and alpha2 (PAFAH1B2) subunits, whereas the beta subunit (PAFAH1B1) has regulatory activity. Trimer formation is not essential for the catalytic activity. Interacts (homodimer form) with PAFAH1B1 (homodimer form); PAFAH1B2 competes with NDEL1 for PAFAH1B1 binding. Interacts with VLDLR; this interaction may modulate the Reelin pathway.

It is found in the cytoplasm. The enzyme catalyses a 1-O-alkyl-2-acetyl-sn-glycero-3-phosphocholine + H2O = a 1-O-alkyl-sn-glycero-3-phosphocholine + acetate + H(+). The catalysed reaction is 1-O-hexadecyl-2-acetyl-sn-glycero-3-phosphocholine + H2O = 1-O-hexadecyl-sn-glycero-3-phosphocholine + acetate + H(+). It carries out the reaction 1-O-hexadecyl-2-acetyl-sn-glycero-3-phosphate + H2O = 1-O-hexadecyl-sn-glycero-3-phosphate + acetate + H(+). It catalyses the reaction 1-O-hexadecyl-2-acetyl-sn-glycero-3-phosphoethanolamine + H2O = 1-O-hexadecyl-sn-glycero-3-phosphoethanolamine + acetate + H(+). With respect to regulation, beta subunit (PAFAH1B1) stimulates the acetylhydrolase activity of the alpha2/alpha2 catalytic homodimer. Its function is as follows. Alpha2 catalytic subunit of the cytosolic type I platelet-activating factor (PAF) acetylhydrolase (PAF-AH (I)) heterotetrameric enzyme that catalyzes the hydrolyze of the acetyl group at the sn-2 position of PAF and its analogs and modulates the action of PAF. The activity and substrate specificity of PAF-AH (I) are affected by its subunit composition. The alpha2/alpha2 homodimer (PAFAH1B2/PAFAH1B2 homodimer) hydrolyzes PAF and 1-O-alkyl-2-acetyl-sn-glycero-3-phosphorylethanolamine (AAGPE) more efficiently than 1-O-alkyl-2-acetyl-sn-glycero-3-phosphoric acid (AAGPA). In contrast, the alpha1/alpha2 heterodimer(PAFAH1B3/PAFAH1B3 heterodimer) hydrolyzes AAGPA more efficiently than PAF, but has little hydrolytic activity towards AAGPE. May play a role in male germ cell meiosis during the late pachytenestage and meiotic divisions as well as early spermiogenesis. This Mus musculus (Mouse) protein is Platelet-activating factor acetylhydrolase IB subunit alpha2.